Consider the following 804-residue polypeptide: Mechanosensitive cation channel TMEM63A (804 aa).

Over Met1–Pro51 the chain is Extracellular. Asn38 is a glycosylation site (N-linked (GlcNAc...) asparagine). Residues Thr52–Arg74 form a helical membrane-spanning segment. At Phe75–Glu133 the chain is on the cytoplasmic side. Residues Asp134–Ser166 form a helical membrane-spanning segment. At Gly167–Asp190 the chain is on the extracellular side. Residues Leu191–Ser216 traverse the membrane as a helical segment. Over Ile217–Val415 the chain is Cytoplasmic. The tract at residues Arg218–Gln413 is intracellular linker IL2; confers mechanosensitivity. Residues Arg416–Ser443 traverse the membrane as a helical segment. At Thr444–Val461 the chain is on the extracellular side. Residue Asn449 is glycosylated (N-linked (GlcNAc...) asparagine). A helical membrane pass occupies residues Ile462–Glu489. Topologically, residues Ser490–Arg494 are cytoplasmic. Residues Ser495 to Leu531 form a helical membrane-spanning segment. Residues Phe532 to Ala553 are Extracellular-facing. The chain crosses the membrane as a helical span at residues Phe554–Ile585. Positions Phe554 to Ile585 are gating helix. Over Met586–Glu605 the chain is Cytoplasmic. Residues Phe606–Tyr623 traverse the membrane as a helical segment. The Extracellular segment spans residues Ser624–Cys627. The chain crosses the membrane as a helical span at residues Pro628–Tyr650. The Cytoplasmic portion of the chain corresponds to Phe651 to Lys660. Residues Arg661 to Arg688 form a helical membrane-spanning segment. Topologically, residues Leu689–Ala693 are extracellular. A helical membrane pass occupies residues Pro694–Leu708. Residues Ala709–Ser804 are Cytoplasmic-facing. Ser738 bears the Phosphoserine mark.

It belongs to the CSC1 (TC 1.A.17) family. Monomer. In terms of processing, N-Glycosylated.

It is found in the lysosome membrane. The protein localises to the early endosome membrane. Its subcellular location is the cell membrane. The enzyme catalyses Ca(2+)(in) = Ca(2+)(out). Its function is as follows. Mechanosensitive cation channel with low conductance and high activation threshold. In contrast to TMEM63B, does not show phospholipid scramblase activity. Acts as a regulator of lysosomal morphology by mediating lysosomal mechanosensitivity. Important for the baby's first breath and respiration throughout life. Upon lung inflation conducts cation currents in alveolar type 1 and 2 cells triggering lamellar body exocytosis and surfactant secretion into airspace. Also acts as an osmosensitive cation channel preferentially activated by hypotonic stress. The protein is Mechanosensitive cation channel TMEM63A of Mus musculus (Mouse).